A 127-amino-acid chain; its full sequence is Small ribosomal subunit protein uS11 (127 aa).

It belongs to the universal ribosomal protein uS11 family. Part of the 30S ribosomal subunit. Interacts with proteins S7 and S18. Binds to IF-3.

Located on the platform of the 30S subunit, it bridges several disparate RNA helices of the 16S rRNA. Forms part of the Shine-Dalgarno cleft in the 70S ribosome. The sequence is that of Small ribosomal subunit protein uS11 from Rickettsia bellii (strain RML369-C).